Reading from the N-terminus, the 160-residue chain is Large ribosomal subunit protein uL15 (160 aa).

A compositionally biased stretch (basic and acidic residues) spans methionine 1 to alanine 13. Positions methionine 1–serine 42 are disordered. Residues arginine 21–isoleucine 35 show a composition bias toward gly residues.

This sequence belongs to the universal ribosomal protein uL15 family. Part of the 50S ribosomal subunit.

Its function is as follows. Binds to the 23S rRNA. The protein is Large ribosomal subunit protein uL15 of Roseobacter denitrificans (strain ATCC 33942 / OCh 114) (Erythrobacter sp. (strain OCh 114)).